The following is a 147-amino-acid chain: Transmembrane protein 210 (147 aa).

A signal peptide spans 1 to 31 (MAPGPWPVSCLRGGPLGLTYLSLLLIPAAAG). Topologically, residues 32–47 (TYCECSLGLSREALIA) are extracellular. Residues 48 to 68 (LLVVLAGISASCFCALVIVAI) form a helical membrane-spanning segment. Residues 69-147 (GVLRAKGETC…PPPPPPLPPE (79 aa)) lie on the Cytoplasmic side of the membrane. The tract at residues 128 to 147 (AIPMEASSEEPPPPPPLPPE) is disordered. Residues 137–147 (EPPPPPPLPPE) are compositionally biased toward pro residues.

The protein localises to the membrane. The protein resides in the cytoplasmic vesicle. Its subcellular location is the secretory vesicle. It localises to the acrosome. In Homo sapiens (Human), this protein is Transmembrane protein 210 (TMEM210).